A 400-amino-acid polypeptide reads, in one-letter code: Probable phospho-2-dehydro-3-deoxyheptonate aldolase (400 aa).

The protein belongs to the class-II DAHP synthase family.

It catalyses the reaction D-erythrose 4-phosphate + phosphoenolpyruvate + H2O = 7-phospho-2-dehydro-3-deoxy-D-arabino-heptonate + phosphate. The protein operates within antibiotic biosynthesis; phenazine biosynthesis. This Pseudomonas fluorescens protein is Probable phospho-2-dehydro-3-deoxyheptonate aldolase (phzC).